A 148-amino-acid chain; its full sequence is Helix-loop-helix protein 14 (148 aa).

Disordered stretches follow at residues 1 to 21 (MAKKNQVARNERERKRVHQVN), 63 to 83 (DPQQPSVSSSTPDYTMNNSNN), and 112 to 132 (GDVSHNFNSPTSSVSSSSYSP). Positions 4–17 (KNQVARNERERKRV) are basic motif. The bHLH domain occupies 4 to 56 (KNQVARNERERKRVHQVNHGFDVLRNRLQPKNHTKKWSKADTLREAVKYIQQL). Residues 18-56 (HQVNHGFDVLRNRLQPKNHTKKWSKADTLREAVKYIQQL) are helix-loop-helix motif. A compositionally biased stretch (polar residues) spans 63-78 (DPQQPSVSSSTPDYTM). Residues 120–132 (SPTSSVSSSSYSP) show a composition bias toward low complexity.

Its subcellular location is the nucleus. Its function is as follows. Probable transcription factor, involved in determining neuroblast cell fate, morphogenesis and aspects of terminal differentiation in both left/right symmetric and asymmetric neuronal lineages. The sequence is that of Helix-loop-helix protein 14 from Caenorhabditis elegans.